We begin with the raw amino-acid sequence, 259 residues long: Glutamate 5-kinase (259 aa).

ATP is bound at residue Lys-18. 3 residues coordinate substrate: Ser-54, Asp-141, and Asn-153. 173 to 174 (SD) is a binding site for ATP.

This sequence belongs to the glutamate 5-kinase family.

The protein resides in the cytoplasm. The catalysed reaction is L-glutamate + ATP = L-glutamyl 5-phosphate + ADP. Its pathway is amino-acid biosynthesis; L-proline biosynthesis; L-glutamate 5-semialdehyde from L-glutamate: step 1/2. Functionally, catalyzes the transfer of a phosphate group to glutamate to form L-glutamate 5-phosphate. This Clavibacter michiganensis subsp. michiganensis (strain NCPPB 382) protein is Glutamate 5-kinase.